The following is a 987-amino-acid chain: Pro-apoptotic serine protease NMA111 (987 aa).

Residues M1–V29 are disordered. Residues S11–F28 show a composition bias toward polar residues. Residues V69 to L262 are serine protease. Active-site charge relay system residues include H110, D141, and S224. PDZ domains lie at E279–Q364 and P878–D950.

The protein belongs to the peptidase S1C family.

The protein resides in the nucleus. Functionally, nuclear serine protease which mediates apoptosis. The polypeptide is Pro-apoptotic serine protease NMA111 (NMA111) (Debaryomyces hansenii (strain ATCC 36239 / CBS 767 / BCRC 21394 / JCM 1990 / NBRC 0083 / IGC 2968) (Yeast)).